The primary structure comprises 114 residues: Large ribosomal subunit protein uL22 (114 aa).

The protein belongs to the universal ribosomal protein uL22 family. As to quaternary structure, part of the 50S ribosomal subunit.

In terms of biological role, this protein binds specifically to 23S rRNA; its binding is stimulated by other ribosomal proteins, e.g. L4, L17, and L20. It is important during the early stages of 50S assembly. It makes multiple contacts with different domains of the 23S rRNA in the assembled 50S subunit and ribosome. Its function is as follows. The globular domain of the protein is located near the polypeptide exit tunnel on the outside of the subunit, while an extended beta-hairpin is found that lines the wall of the exit tunnel in the center of the 70S ribosome. This Ehrlichia canis (strain Jake) protein is Large ribosomal subunit protein uL22.